The primary structure comprises 160 residues: ATP synthase subunit b (160 aa).

A helical transmembrane segment spans residues 15–35 (LVIVIGLLFWFLRGFLGGILE).

The protein belongs to the ATPase B chain family. F-type ATPases have 2 components, F(1) - the catalytic core - and F(0) - the membrane proton channel. F(1) has five subunits: alpha(3), beta(3), gamma(1), delta(1), epsilon(1). F(0) has four main subunits: a(1), b(1), b'(1) and c(10-14). The alpha and beta chains form an alternating ring which encloses part of the gamma chain. F(1) is attached to F(0) by a central stalk formed by the gamma and epsilon chains, while a peripheral stalk is formed by the delta, b and b' chains.

It localises to the cellular thylakoid membrane. F(1)F(0) ATP synthase produces ATP from ADP in the presence of a proton or sodium gradient. F-type ATPases consist of two structural domains, F(1) containing the extramembraneous catalytic core and F(0) containing the membrane proton channel, linked together by a central stalk and a peripheral stalk. During catalysis, ATP synthesis in the catalytic domain of F(1) is coupled via a rotary mechanism of the central stalk subunits to proton translocation. Its function is as follows. Component of the F(0) channel, it forms part of the peripheral stalk, linking F(1) to F(0). In Synechococcus sp. (strain CC9605), this protein is ATP synthase subunit b.